A 207-amino-acid polypeptide reads, in one-letter code: Large ribosomal subunit protein uL4 (207 aa).

The disordered stretch occupies residues 53 to 85; that stretch reads ERSDVARTGKKFGRQKGGGTARHGDRKAPIFIG.

This sequence belongs to the universal ribosomal protein uL4 family. Part of the 50S ribosomal subunit.

In terms of biological role, one of the primary rRNA binding proteins, this protein initially binds near the 5'-end of the 23S rRNA. It is important during the early stages of 50S assembly. It makes multiple contacts with different domains of the 23S rRNA in the assembled 50S subunit and ribosome. Functionally, forms part of the polypeptide exit tunnel. This chain is Large ribosomal subunit protein uL4, found in Novosphingobium aromaticivorans (strain ATCC 700278 / DSM 12444 / CCUG 56034 / CIP 105152 / NBRC 16084 / F199).